The primary structure comprises 365 residues: Chorismate synthase (365 aa).

NADP(+) is bound at residue R47. FMN contacts are provided by residues 124-126, G287, 302-306, and R328; these read RAS and KPTAT.

This sequence belongs to the chorismate synthase family. As to quaternary structure, homotetramer. FMNH2 serves as cofactor.

The enzyme catalyses 5-O-(1-carboxyvinyl)-3-phosphoshikimate = chorismate + phosphate. Its pathway is metabolic intermediate biosynthesis; chorismate biosynthesis; chorismate from D-erythrose 4-phosphate and phosphoenolpyruvate: step 7/7. Its function is as follows. Catalyzes the anti-1,4-elimination of the C-3 phosphate and the C-6 proR hydrogen from 5-enolpyruvylshikimate-3-phosphate (EPSP) to yield chorismate, which is the branch point compound that serves as the starting substrate for the three terminal pathways of aromatic amino acid biosynthesis. This reaction introduces a second double bond into the aromatic ring system. The polypeptide is Chorismate synthase (Prochlorococcus marinus (strain MIT 9215)).